The following is a 414-amino-acid chain: Zinc metalloproteinase-disintegrin-like batroxstatin-3 (414 aa).

Residues Asn7 and Asn70 are each glycosylated (N-linked (GlcNAc...) asparagine). A Peptidase M12B domain is found at Lys10–Pro204. 3 disulfide bridges follow: Cys121-Cys199, Cys161-Cys183, and Cys163-Cys168. His146 lines the Zn(2+) pocket. Residue Glu147 is part of the active site. Residues His150 and His156 each contribute to the Zn(2+) site. The 87-residue stretch at Pro212 to Asn298 folds into the Disintegrin domain. Val214, Asn217, Glu221, Glu224, and Asp227 together coordinate Ca(2+). Intrachain disulfides connect Cys215-Cys244, Cys226-Cys239, Cys228-Cys234, Cys238-Cys261, Cys252-Cys258, Cys257-Cys283, Cys270-Cys290, Cys277-Cys309, Cys302-Cys314, Cys321-Cys371, Cys336-Cys381, Cys349-Cys359, Cys366-Cys403, and Cys397-Cys408. A D/ECD-tripeptide motif is present at residues Glu276 to Asp278. Positions 278, 281, 293, and 294 each coordinate Ca(2+).

This sequence belongs to the venom metalloproteinase (M12B) family. P-III subfamily. P-IIIa sub-subfamily. In terms of assembly, monomer. Zn(2+) serves as cofactor. In terms of tissue distribution, expressed by the venom gland.

The protein localises to the secreted. Its function is as follows. Snake venom zinc metalloprotease that induces apoptosis in vascular endothelial cells (VEC), without degrading the extracellular matrix (it cannot cleave collagen) or inhibiting adhesion of VEC. Has also fibrinogenolytic and hemorrhagic activities. This Bothrops atrox (Barba amarilla) protein is Zinc metalloproteinase-disintegrin-like batroxstatin-3.